Consider the following 795-residue polypeptide: Phenylalanine--tRNA ligase beta subunit (795 aa).

One can recognise a tRNA-binding domain in the interval 39–148; that stretch reads AGRFTGVVVG…AEAPIGQDIR (110 aa). Residues 401–476 enclose the B5 domain; that stretch reads PQPATITLRR…RVYGYDAIPN (76 aa). 4 residues coordinate Mg(2+): aspartate 454, aspartate 460, glutamate 463, and glutamate 464. One can recognise an FDX-ACB domain in the interval 701–794; that stretch reads SRFPANRRDI…LKQRFQASLR (94 aa).

It belongs to the phenylalanyl-tRNA synthetase beta subunit family. Type 1 subfamily. In terms of assembly, tetramer of two alpha and two beta subunits. It depends on Mg(2+) as a cofactor.

The protein localises to the cytoplasm. The catalysed reaction is tRNA(Phe) + L-phenylalanine + ATP = L-phenylalanyl-tRNA(Phe) + AMP + diphosphate + H(+). The protein is Phenylalanine--tRNA ligase beta subunit of Sodalis glossinidius (strain morsitans).